The chain runs to 181 residues: MAVFVANESGANDVDEVRLTALARFVLDAMKVNPLAELSVMLVEEKAMADLHVRYMGEEGPTDVLSFAQDDAFDASWSESVDDDPTTLLGDVVLCPDVARRQAEQAGHSHERELHLLCTHGILHLLGYDHAEPDEEREMWKIQNKLLASWDTAVKAAGGKRPAGGADGADGAGEPGPTAAR.

Positions 120, 124, and 130 each coordinate Zn(2+). The segment at 157-181 (AGGKRPAGGADGADGAGEPGPTAAR) is disordered. Gly residues predominate over residues 161–174 (RPAGGADGADGAGE).

This sequence belongs to the endoribonuclease YbeY family. Requires Zn(2+) as cofactor.

The protein resides in the cytoplasm. Its function is as follows. Single strand-specific metallo-endoribonuclease involved in late-stage 70S ribosome quality control and in maturation of the 3' terminus of the 16S rRNA. The protein is Endoribonuclease YbeY of Frankia alni (strain DSM 45986 / CECT 9034 / ACN14a).